Here is a 262-residue protein sequence, read N- to C-terminus: Tritrans,polycis-undecaprenyl-diphosphate synthase (geranylgeranyl-diphosphate specific) (262 aa).

D40 is an active-site residue. A Mg(2+)-binding site is contributed by D40. Substrate contacts are provided by residues G41–R44, W45, and S85–E87. The active-site Proton acceptor is N88. Substrate contacts are provided by residues R92, R211, and R217–S219. E230 lines the Mg(2+) pocket.

This sequence belongs to the UPP synthase family. In terms of assembly, homodimer. Requires Mg(2+) as cofactor.

The enzyme catalyses geranylgeranyl diphosphate + 7 isopentenyl diphosphate = tri-trans,hepta-cis-undecaprenyl diphosphate + 7 diphosphate. In terms of biological role, catalyzes the sequential condensation of isopentenyl diphosphate (IPP) with geranylgeranyl diphosphate (GGPP) to yield (2Z,6Z,10Z,14Z,18Z,22Z,26Z,30E,34E,38E)-undecaprenyl diphosphate (tritrans,heptacis-UPP). It is probably the precursor of glycosyl carrier lipids. The chain is Tritrans,polycis-undecaprenyl-diphosphate synthase (geranylgeranyl-diphosphate specific) from Sulfurisphaera tokodaii (strain DSM 16993 / JCM 10545 / NBRC 100140 / 7) (Sulfolobus tokodaii).